The following is a 240-amino-acid chain: 2,3,4,5-tetrahydropyridine-2,6-dicarboxylate N-acetyltransferase (240 aa).

The protein belongs to the transferase hexapeptide repeat family. DapH subfamily.

The enzyme catalyses (S)-2,3,4,5-tetrahydrodipicolinate + acetyl-CoA + H2O = L-2-acetamido-6-oxoheptanedioate + CoA. The protein operates within amino-acid biosynthesis; L-lysine biosynthesis via DAP pathway; LL-2,6-diaminopimelate from (S)-tetrahydrodipicolinate (acetylase route): step 1/3. Functionally, catalyzes the transfer of an acetyl group from acetyl-CoA to tetrahydrodipicolinate. The protein is 2,3,4,5-tetrahydropyridine-2,6-dicarboxylate N-acetyltransferase of Bacillus thuringiensis (strain Al Hakam).